A 389-amino-acid chain; its full sequence is Phenylpropanoylacetyl-CoA synthase (389 aa).

Cys163 is an active-site residue.

It belongs to the thiolase-like superfamily. Chalcone/stilbene synthases family. In terms of assembly, homodimer. In terms of tissue distribution, expressed in both the leaf and rhizome, with higher expression in the rhizome.

The catalysed reaction is (E)-feruloyl-CoA + malonyl-CoA + H(+) = (E)-feruloylacetyl-CoA + CO2 + CoA. It catalyses the reaction 4-coumaroyl-CoA + malonyl-CoA + H(+) = (4-coumaroyl)acetyl-CoA + CO2 + CoA. The protein operates within secondary metabolite biosynthesis; flavonoid biosynthesis. Catalyzes the formation of feruloyldiketide-CoA by condensing feruloyl-CoA and malonyl-CoA in the curcuminoid biosynthesis. Has no activity with cinnamoyl-CoA. This Curcuma longa (Turmeric) protein is Phenylpropanoylacetyl-CoA synthase (DCS).